We begin with the raw amino-acid sequence, 380 residues long: Crotonobetainyl-CoA reductase (380 aa).

Belongs to the acyl-CoA dehydrogenase family. Homotetramer. It depends on FAD as a cofactor.

Its subcellular location is the cytoplasm. The catalysed reaction is 4-(trimethylamino)butanoyl-CoA + oxidized [electron-transfer flavoprotein] + H(+) = crotonobetainyl-CoA + reduced [electron-transfer flavoprotein]. Its pathway is amine and polyamine metabolism; carnitine metabolism. Its function is as follows. Catalyzes the reduction of crotonobetainyl-CoA to gamma-butyrobetainyl-CoA. This Proteus sp. (strain LE138) protein is Crotonobetainyl-CoA reductase.